Here is a 194-residue protein sequence, read N- to C-terminus: Anaphase-promoting complex subunit CDC26 (194 aa).

The tract at residues 47–194 (EPMDQSEPPR…PSSNTRSHRH (148 aa)) is disordered. Composition is skewed to polar residues over residues 79 to 94 (GECT…TSAR) and 102 to 112 (LTLSTPVNPVS). Composition is skewed to low complexity over residues 154–166 (DESP…PESP) and 174–194 (TPGN…SHRH).

Belongs to the CDC26 family. As to quaternary structure, the APC/C complex is probably composed of at least 12 subunits: apc-2, apc-10, apc-11, cdc-26, emb-1, emb-27, emb-30, mat-1, mat-2, mat-3, such-1 and gfi-3.

The protein localises to the nucleus. It functions in the pathway protein modification; protein ubiquitination. Functionally, probable component of the anaphase promoting complex/cyclosome (APC/C), a cell cycle-regulated E3 ubiquitin ligase that controls progression through mitosis and the G1 phase of the cell cycle. The APC/C complex acts by mediating ubiquitination and subsequent degradation of target proteins. Developmental role in early embryogenesis and the metaphase to anaphase transition in meiosis and mitosis. Required for embryonic anterior-posterior axis formation. This Caenorhabditis elegans protein is Anaphase-promoting complex subunit CDC26.